The following is a 254-amino-acid chain: Phosphate import ATP-binding protein PstB (254 aa).

Residues 7 to 249 (MVAESMSFYY…PREKQTEDYI (243 aa)) enclose the ABC transporter domain. An ATP-binding site is contributed by 39–46 (GPSGCGKS).

It belongs to the ABC transporter superfamily. Phosphate importer (TC 3.A.1.7) family. As to quaternary structure, the complex is composed of two ATP-binding proteins (PstB), two transmembrane proteins (PstC and PstA) and a solute-binding protein (PstS).

The protein localises to the cell inner membrane. The catalysed reaction is phosphate(out) + ATP + H2O = ADP + 2 phosphate(in) + H(+). Its function is as follows. Part of the ABC transporter complex PstSACB involved in phosphate import. Responsible for energy coupling to the transport system. This Chlorobium chlorochromatii (strain CaD3) protein is Phosphate import ATP-binding protein PstB.